Consider the following 603-residue polypeptide: Pentatricopeptide repeat-containing protein At2g02980, chloroplastic (603 aa).

The transit peptide at 1 to 38 (MAISSASLISSFSHAETFTKHSKIDTVNTQNPILLISK) directs the protein to the chloroplast. 10 PPR repeats span residues 93-127 (DIVIFNSMARGYSRFTNPLEVFSLFVEILEDGILP), 128-162 (DNYTFPSLLKACAVAKALEEGRQLHCLSMKLGLDD), 163-193 (NVYVCPTLINMYTECEDVDSARCVFDRIVEP), 194-228 (CVVCYNAMITGYARRNRPNEALSLFREMQGKYLKP), 229-263 (NEITLLSVLSSCALLGSLDLGKWIHKYAKKHSFCK), 264-294 (YVKVNTALIDMFAKCGSLDDAVSIFEKMRYK), 295-329 (DTQAWSAMIVAYANHGKAEKSMLMFERMRSENVQP), 330-365 (DEITFLGLLNACSHTGRVEEGRKYFSQMVSKFGIVP), 366-400 (SIKHYGSMVDLLSRAGNLEDAYEFIDKLPISPTPM), and 432-466 (HGGDYVILSNLYARNKKWEYVDSLRKVMKDRKAVK). Residues 401–476 (LWRILLAACS…VPGCSSIEVN (76 aa)) form a type E motif region. Positions 477–507 (NVVHEFFSGDGVKSATTKLHRALDEMVKELK) are type E(+) motif. Residues 508–603 (LSGYVPDTSM…DGKCSCGDFW (96 aa)) are type DYW motif.

Belongs to the PPR family. PCMP-H subfamily.

Its subcellular location is the plastid. It is found in the chloroplast. Involved in RNA editing event in chloroplasts. Required for the editing of a single site in ndhD transcript, which is a plastid-encoded subunits of the chloroplast NAD(P)H dehydrogenase (NDH) complex. Not essential for the activity of the NDH complex of the photosynthetic electron transport chain. The polypeptide is Pentatricopeptide repeat-containing protein At2g02980, chloroplastic (PCMP-H26) (Arabidopsis thaliana (Mouse-ear cress)).